The sequence spans 319 residues: Annexin A4 (319 aa).

At threonine 7 the chain carries Phosphothreonine. The residue at position 12 (serine 12) is a Phosphoserine. 4 Annexin repeats span residues 14–85 (FNAT…GLMT), 86–157 (PTVL…SLSA), 169–241 (ALMK…AIVK), and 245–316 (SKPS…VLCG). 3 positions are modified to N6-acetyllysine: lysine 213, lysine 293, and lysine 300.

This sequence belongs to the annexin family.

It is found in the zymogen granule membrane. Its function is as follows. Calcium/phospholipid-binding protein which promotes membrane fusion and is involved in exocytosis. This Mus musculus (Mouse) protein is Annexin A4 (Anxa4).